Reading from the N-terminus, the 293-residue chain is 3-methyl-2-oxobutanoate hydroxymethyltransferase (293 aa).

Residues M1 to P26 are disordered. D68 and D111 together coordinate Mg(2+). Residues D68–S69, D111, and K140 each bind 3-methyl-2-oxobutanoate. E142 is a binding site for Mg(2+). The Proton acceptor role is filled by E209.

This sequence belongs to the PanB family. Homodecamer; pentamer of dimers. The cofactor is Mg(2+).

Its subcellular location is the cytoplasm. The enzyme catalyses 3-methyl-2-oxobutanoate + (6R)-5,10-methylene-5,6,7,8-tetrahydrofolate + H2O = 2-dehydropantoate + (6S)-5,6,7,8-tetrahydrofolate. The protein operates within cofactor biosynthesis; (R)-pantothenate biosynthesis; (R)-pantoate from 3-methyl-2-oxobutanoate: step 1/2. Catalyzes the reversible reaction in which hydroxymethyl group from 5,10-methylenetetrahydrofolate is transferred onto alpha-ketoisovalerate to form ketopantoate. This chain is 3-methyl-2-oxobutanoate hydroxymethyltransferase, found in Delftia acidovorans (strain DSM 14801 / SPH-1).